The chain runs to 302 residues: Sulfate adenylyltransferase subunit 2 (302 aa).

It belongs to the PAPS reductase family. CysD subfamily. As to quaternary structure, heterodimer composed of CysD, the smaller subunit, and CysN.

The enzyme catalyses sulfate + ATP + H(+) = adenosine 5'-phosphosulfate + diphosphate. It participates in sulfur metabolism; hydrogen sulfide biosynthesis; sulfite from sulfate: step 1/3. Functionally, with CysN forms the ATP sulfurylase (ATPS) that catalyzes the adenylation of sulfate producing adenosine 5'-phosphosulfate (APS) and diphosphate, the first enzymatic step in sulfur assimilation pathway. APS synthesis involves the formation of a high-energy phosphoric-sulfuric acid anhydride bond driven by GTP hydrolysis by CysN coupled to ATP hydrolysis by CysD. This chain is Sulfate adenylyltransferase subunit 2, found in Shigella boydii serotype 4 (strain Sb227).